Reading from the N-terminus, the 1819-residue chain is Non-reducing polyketide synthase nscA (1819 aa).

Residues 25–277 (RRLDQHSKDR…PLPVYDGLCH (253 aa)) are N-terminal acylcarrier protein transacylase domain (SAT). The 434-residue stretch at 413-846 (SSKLAIVGMA…GGNTTLLLED (434 aa)) folds into the Ketosynthase family 3 (KS3) domain. Active-site for beta-ketoacyl synthase activity residues include C586, H721, and H764. Residues 952–1249 (FTSQGAYYHG…MIPSAPAMSS (298 aa)) form a malonyl-CoA:ACP transacylase (MAT) domain region. The product template (PT) domain stretch occupies residues 1339-1658 (TSLVHQITAE…RLLMDRFFSP (320 aa)). The interval 1343–1479 (HQITAETVEA…AMIRFEDPMA (137 aa)) is N-terminal hotdog fold. The 311-residue stretch at 1343 to 1653 (HQITAETVEA…IRRVPRLLMD (311 aa)) folds into the PKS/mFAS DH domain. H1375 acts as the Proton acceptor; for dehydratase activity in catalysis. A C-terminal hotdog fold region spans residues 1507–1653 (ASRLSKPLAY…IRRVPRLLMD (147 aa)). Catalysis depends on D1564, which acts as the Proton donor; for dehydratase activity. Residues 1703–1742 (SSTMASKAPEPAPLLATSSESSTPKESPIVTPAESEREDP) form a disordered region. Low complexity predominate over residues 1719–1730 (TSSESSTPKESP). The region spanning 1742–1819 (PVDNNMISQC…EMTAWIEEYC (78 aa)) is the Carrier domain. S1779 carries the O-(pantetheine 4'-phosphoryl)serine modification.

Pantetheine 4'-phosphate serves as cofactor.

Its pathway is secondary metabolite biosynthesis. Functionally, non-reducing polyketide synthase; part of the gene cluster that mediates the biosynthesis of neosartoricin B, a prenylated anthracenone that probably exhibits T-cell antiproliferative activity, suggestive of a physiological role as an immunosuppressive agent. The non-reducing polyketide synthase nscA probably synthesizes and cyclizes the decaketide backbone. The hydrolase nscB then mediates the product release through hydrolysis followed by spontaneous decarboxylation. The prenyltransferase nscD catalyzes the addition of the dimethylallyl group to the aromatic C5. The FAD-dependent monooxygenase nscC is then responsible for the stereospecific hydroxylation at C2. Neosartoricin B can be converted into two additional compounds neosartoricins C and D. Neosartoricin C is a spirocyclic compound that is cyclized through the attack of C3 hydroxyl on C14, followed by dehydration. On the other hand, neosartoricin D is a further cyclized compound in which attack of C2 on C14 in neosartoricin C results in the formation of the acetal-containing dioxabicyclo-octanone ring. Both of these compounds are novel and possibly represent related metabolites of the gene cluster. The sequence is that of Non-reducing polyketide synthase nscA from Trichophyton verrucosum (strain HKI 0517).